A 405-amino-acid chain; its full sequence is 5-azacytidine-induced protein 2 (405 aa).

The tract at residues 1–198 (MDTLVEDDIC…TELQKARQTG (198 aa)) is homodimerization. Positions 40–197 (ALVTAYEDIK…RTELQKARQT (158 aa)) form a coiled coil. Residues 229 to 270 (SDNMQHAYWELKREMSNLHLVTQVQAELLRKLKTSAAVKKAC) form an interaction with TBK1 and IKBKE region. Phosphoserine is present on residues S331 and S366. Positions 357–377 (LEDNSWVFPSPPKSSETAFGE) are disordered.

As to quaternary structure, homodimer. Interacts with IKBKE and TBK1. Interacts with TICAM1. Interacts with TAX1BP1. Interacts with CALCOCO2. In terms of processing, ubiquitinated via 'Lys-48'-linked polyubiquitination by TRIM38, leading to its degradation. As to expression, testis, ovary, heart, lung, kidney and brain. Expressed mainly in the spermatocytes or spermatids in the testis.

It is found in the cytoplasm. Functionally, adapter protein which binds TBK1 and IKBKE playing a role in antiviral innate immunity. Activates serine/threonine-protein kinase TBK1 and facilitates its oligomerization. Enhances the phosphorylation of NF-kappa-B p65 subunit RELA by TBK1. Promotes TBK1-induced as well as TNF-alpha or PMA-induced activation of NF-kappa-B. Participates in IFNB promoter activation via TICAM1. In Mus musculus (Mouse), this protein is 5-azacytidine-induced protein 2 (Azi2).